Here is a 737-residue protein sequence, read N- to C-terminus: Ribosome-releasing factor 2, mitochondrial (737 aa).

Residues 1–36 (MLCNRLHKAAFAARLRPRLPATVASCRQVHNSDGTI) constitute a mitochondrion transit peptide. The tr-type G domain occupies 39–318 (KRIRNIGILA…SVLNFLPAPS (280 aa)). Residues 48–55 (AHIDAGKT), 112–116 (DTPGH), and 166–169 (NKMD) contribute to the GTP site.

Belongs to the TRAFAC class translation factor GTPase superfamily. Classic translation factor GTPase family. EF-G/EF-2 subfamily.

It localises to the mitochondrion. Functionally, mitochondrial GTPase that mediates the disassembly of ribosomes from messenger RNA at the termination of mitochondrial protein biosynthesis. Not involved in the GTP-dependent ribosomal translocation step during translation elongation. This chain is Ribosome-releasing factor 2, mitochondrial, found in Anopheles gambiae (African malaria mosquito).